Reading from the N-terminus, the 758-residue chain is Vitamin K-dependent gamma-carboxylase (758 aa).

Residues M1–G31 form a disordered region. At A2 the chain carries N-acetylalanine. Residues A2–D60 are Cytoplasmic-facing. Positions P12–A22 are enriched in basic and acidic residues. A helical transmembrane segment spans residues P61 to Q81. Over E82–D113 the chain is Lumenal. C99 and C450 form a disulfide bridge. The chain crosses the membrane as a helical span at residues W114 to R134. Residues Y135 to R136 lie on the Cytoplasmic side of the membrane. The helical transmembrane segment at I137–W157 threads the bilayer. The Lumenal segment spans residues N158 to Q292. Residues L293–P313 traverse the membrane as a helical segment. Residues E314–R361 lie on the Cytoplasmic side of the membrane. The chain crosses the membrane as a helical span at residues L362–F382. Residues L383 to F758 lie on the Lumenal side of the membrane. Residues P727 to F758 form a disordered region. Residues P734 to N750 are compositionally biased toward low complexity.

Belongs to the vitamin K-dependent gamma-carboxylase family. In terms of assembly, monomer. May interact with CALU.

Its subcellular location is the endoplasmic reticulum membrane. The enzyme catalyses 4-carboxy-L-glutamyl-[protein] + 2,3-epoxyphylloquinone + H2O + H(+) = phylloquinol + L-glutamyl-[protein] + CO2 + O2. Mediates the vitamin K-dependent carboxylation of glutamate residues to calcium-binding gamma-carboxyglutamate (Gla) residues with the concomitant conversion of the reduced hydroquinone form of vitamin K to vitamin K epoxide. Catalyzes gamma-carboxylation of various proteins, such as blood coagulation factors (F2, F7, F9 and F10), osteocalcin (BGLAP) or matrix Gla protein (MGP). The chain is Vitamin K-dependent gamma-carboxylase (GGCX) from Delphinapterus leucas (Beluga whale).